Consider the following 419-residue polypeptide: Fumarylacetoacetase (419 aa).

N-acetylserine is present on Ser2. A Phosphoserine modification is found at Ser92. Asp126 serves as a coordination point for Ca(2+). Tyr128 is a substrate binding site. His133 acts as the Proton acceptor in catalysis. Arg142 contacts substrate. Glu199, Glu201, and Asp233 together coordinate Ca(2+). A Mg(2+)-binding site is contributed by Asp233. Substrate contacts are provided by Gln240 and Tyr244. Mg(2+) contacts are provided by Lys253 and Thr257. Ser309 carries the phosphoserine modification. Substrate is bound at residue Thr350. At Tyr395 the chain carries Phosphotyrosine.

This sequence belongs to the FAH family. As to quaternary structure, homodimer. Requires Ca(2+) as cofactor. The cofactor is Mg(2+). As to expression, mainly expressed in liver and kidney. Lower levels are also detected in many other tissues.

It catalyses the reaction 4-fumarylacetoacetate + H2O = acetoacetate + fumarate + H(+). The protein operates within amino-acid degradation; L-phenylalanine degradation; acetoacetate and fumarate from L-phenylalanine: step 6/6. This chain is Fumarylacetoacetase (FAH), found in Homo sapiens (Human).